An 816-amino-acid chain; its full sequence is Leucine--tRNA ligase (816 aa).

The 'HIGH' region motif lies at proline 40–histidine 51. A 'KMSKS' region motif is present at residues lysine 576–serine 580. Residue lysine 579 participates in ATP binding.

The protein belongs to the class-I aminoacyl-tRNA synthetase family.

The protein localises to the cytoplasm. The enzyme catalyses tRNA(Leu) + L-leucine + ATP = L-leucyl-tRNA(Leu) + AMP + diphosphate. This Chlorobium phaeobacteroides (strain DSM 266 / SMG 266 / 2430) protein is Leucine--tRNA ligase.